We begin with the raw amino-acid sequence, 507 residues long: Putative histone deacetylase 2 (507 aa).

The interval 29 to 342 is histone deacetylase; sequence RNVAYYYHKD…WALETGVILG (314 aa). His162 is an active-site residue. Residues 444–507 are disordered; that stretch reads EECFVEEDSK…RKDLNIPGIP (64 aa). Residues 482-501 show a composition bias toward basic and acidic residues; the sequence is SHSDVIEEAKYEDRDRRKDL.

This sequence belongs to the histone deacetylase family. HD type 1 subfamily. In terms of assembly, may be a component of a histone deacetylase complex containing saeg-2, saeg-1 and hda-2.

It localises to the nucleus. It catalyses the reaction N(6)-acetyl-L-lysyl-[histone] + H2O = L-lysyl-[histone] + acetate. Probably responsible for the deacetylation of lysine residues on the N-terminal part of the core histones (H2A, H2B, H3 and H4). Histone deacetylation gives a tag for epigenetic repression and plays an important role in transcriptional regulation, cell cycle progression and developmental events. Histone deacetylases act via the formation of large multiprotein complexes. As a likely component of a histone deacetylase complex, together with saeg-1 and hda-2, functions downstream of the cAMP-dependent kinase egl-4 to regulate the expression of genes required for egg-laying and forgaging. This Caenorhabditis elegans protein is Putative histone deacetylase 2 (hda-2).